The chain runs to 179 residues: MEGEELIYHNIINEILVGYIKYYINDISEHELSPYQQQIKKILTYYDECLNKQVTITFSLTSVQEIKTQFTGVVTELFKDLINWGRICGFIVFSAKMAKYCKDANNHLESTVITTAYNFMKHNLLPWMISHGGQEEFLAFSLHSDMYSVIFNIKYFLSKFCNHMFFRSCVQLLRNCNLI.

A BH1 motif is present at residues 76–95 (ELFKDLINWGRICGFIVFSA). The BH2 motif lies at 126–141 (PWMISHGGQEEFLAFS).

It belongs to the Bcl-2 family. As to quaternary structure, interacts with host BECN1 (via BH3 homology domain); this interaction allows the virus to inhibit BECN1, and thus autophagy. Interacts with host BID. Interacts with host BAX.

It localises to the host mitochondrion. The protein localises to the host endoplasmic reticulum. Its function is as follows. Suppresses apoptosis in host cell to promote the viral replication. Has the ability to potentially bind to all the members of the proapoptotic Bcl-2 family. Inhibits autophagy by interacting with host Beclin 1 (BECN1). The polypeptide is Apoptosis regulator Bcl-2 homolog (Ornithodoros (relapsing fever ticks)).